Here is a 436-residue protein sequence, read N- to C-terminus: GTPase Der (436 aa).

2 EngA-type G domains span residues 4-167 and 176-351; these read PVVA…PKDH and IKFC…DNHA. GTP is bound by residues 10–17, 57–61, 119–122, 182–189, 229–233, and 294–297; these read GRPNVGKS, DTGGI, NKID, DTAGM, and NKWD. Positions 352–436 constitute a KH-like domain; the sequence is MRVQTNVLNE…PIKIIARPRK (85 aa).

This sequence belongs to the TRAFAC class TrmE-Era-EngA-EngB-Septin-like GTPase superfamily. EngA (Der) GTPase family. As to quaternary structure, associates with the 50S ribosomal subunit.

GTPase that plays an essential role in the late steps of ribosome biogenesis. The chain is GTPase Der from Geobacillus thermodenitrificans (strain NG80-2).